The chain runs to 132 residues: D-ribose pyranase (132 aa).

Histidine 20 functions as the Proton donor in the catalytic mechanism. Residues aspartate 28, histidine 99, and tyrosine 121 to asparagine 123 each bind substrate.

The protein belongs to the RbsD / FucU family. RbsD subfamily. Homodecamer.

It is found in the cytoplasm. The enzyme catalyses beta-D-ribopyranose = beta-D-ribofuranose. It functions in the pathway carbohydrate metabolism; D-ribose degradation; D-ribose 5-phosphate from beta-D-ribopyranose: step 1/2. Catalyzes the interconversion of beta-pyran and beta-furan forms of D-ribose. This Lactococcus lactis subsp. cremoris (strain MG1363) protein is D-ribose pyranase.